Consider the following 235-residue polypeptide: Keratin-associated protein 4-16 (235 aa).

The tract at residues 1 to 132 (MCSSKMPCSP…CCCPCCCLRP (132 aa)) is 16 X 5 AA repeats of C-C-[GIKRQVHEML]-[SPTRV]-[STVQRCP]. 16 tandem repeats follow at residues 23–27 (CCHPS), 28–32 (CCQTT), 33–37 (CCRTT), 48–52 (CCRPQ), 53–57 (CCHSV), 58–62 (CCQPT), 63–67 (CCRPS), 68–72 (CCQTT), 78–82 (CCHPS), 83–87 (CCVSS), 88–92 (CCRPQ), 93–97 (CCHSV), 103–107 (CCHPS), 108–112 (CCISS), 118–122 (CCESS), and 128–132 (CCLRP). Residues 203-224 (SPSPSLPSLSPPLPSPPLPSPH) are compositionally biased toward pro residues. Residues 203 to 235 (SPSPSLPSLSPPLPSPPLPSPHFPSVNPKSMLQ) form a disordered region.

It belongs to the KRTAP type 4 family. In terms of assembly, interacts with hair keratins.

In the hair cortex, hair keratin intermediate filaments are embedded in an interfilamentous matrix, consisting of hair keratin-associated proteins (KRTAP), which are essential for the formation of a rigid and resistant hair shaft through their extensive disulfide bond cross-linking with abundant cysteine residues of hair keratins. The matrix proteins include the high-sulfur and high-glycine-tyrosine keratins. This chain is Keratin-associated protein 4-16, found in Homo sapiens (Human).